A 99-amino-acid polypeptide reads, in one-letter code: MVSIKEHLEELLESFDYSGDVEERIRLLRAAIGRIGNMFYGTENEEIYADQVRRIKLRLRELRETYATSEDNWRELMDNLEELRDQIERLAIRGGIIEK.

A coiled-coil region spans residues 43 to 95; sequence ENEEIYADQVRRIKLRLRELRETYATSEDNWRELMDNLEELRDQIERLAIRGG.

This is an uncharacterized protein from Archaeoglobus fulgidus (strain ATCC 49558 / DSM 4304 / JCM 9628 / NBRC 100126 / VC-16).